The sequence spans 208 residues: dITP/XTP pyrophosphatase (208 aa).

17-22 lines the substrate pocket; the sequence is SNNPGK. Mg(2+) is bound by residues Asp49 and Asp78. The active-site Proton acceptor is the Asp78. Substrate is bound by residues Ser79, 164–167, Lys187, and 192–193; these read FGYD and HR.

The protein belongs to the HAM1 NTPase family. As to quaternary structure, homodimer. The cofactor is Mg(2+).

The catalysed reaction is XTP + H2O = XMP + diphosphate + H(+). It catalyses the reaction dITP + H2O = dIMP + diphosphate + H(+). It carries out the reaction ITP + H2O = IMP + diphosphate + H(+). Functionally, pyrophosphatase that catalyzes the hydrolysis of nucleoside triphosphates to their monophosphate derivatives, with a high preference for the non-canonical purine nucleotides XTP (xanthosine triphosphate), dITP (deoxyinosine triphosphate) and ITP. Seems to function as a house-cleaning enzyme that removes non-canonical purine nucleotides from the nucleotide pool, thus preventing their incorporation into DNA/RNA and avoiding chromosomal lesions. In Burkholderia pseudomallei (strain K96243), this protein is dITP/XTP pyrophosphatase.